A 428-amino-acid polypeptide reads, in one-letter code: Spliceosome RNA helicase DDX39B (428 aa).

Positions 1-19 (MAENDVDNELLDYEDDEVE) are enriched in acidic residues. The segment at 1–31 (MAENDVDNELLDYEDDEVETAAGGDGAEAPA) is disordered. Residue A2 is modified to N-acetylalanine. An N6-acetyllysine; alternate modification is found at K36. K36 participates in a covalent cross-link: Glycyl lysine isopeptide (Lys-Gly) (interchain with G-Cter in SUMO2); alternate. 2 positions are modified to phosphoserine: S38 and S41. The Q motif signature appears at 45-73 (SGFRDFLLKPELLRAIVDCGFEHPSEVQH). The region spanning 76–249 (IPQAILGMDV…RKFMQDPMEI (174 aa)) is the Helicase ATP-binding domain. 89-96 (AKSGMGKT) contributes to the ATP binding site. T172 carries the phosphothreonine modification. The DECD box signature appears at 196–199 (DECD). The Helicase C-terminal domain maps to 261–422 (GLQQYYVKLK…ELPDEIDISS (162 aa)).

Belongs to the DEAD box helicase family. DECD subfamily. In terms of assembly, homodimer, and heterodimer with DDX39A. DDX39B interacts with the THO subcomplex to form the THO-DDX39B complex which multimerizes into a 28-subunit tetrameric assembly. Component of the transcription/export (TREX) complex at least composed of ALYREF/THOC4, DDX39B, SARNP/CIP29, CHTOP and the THO subcomplex; in the complex interacts with THOC2. THOC1-THOC2-THOC3-DDX39B subcomplex is sufficient for the interaction with export factor NXF1-NXT1. TREX seems to have a dynamic structure involving ATP-dependent remodeling. Within the TREX complex bridges ALYREF/THOC4 and the THO subcomplex, and, in a ATP-dependent manner, ALYREF/THOC4 and SARNP/CIP29. Component of the spliceosome. Interacts directly with U2AF2. Interacts with RBM8A, RNPS1 and SRRM1, FYTTD1/UIF, THOC1, MX1 and POLDIP3. Interacts with LUZP4. Interacts with SARNP/CIP29 (via the C-terminal domain); the interaction is direct and facilitates RNA binding of DDX39B.

The protein resides in the nucleus. The protein localises to the nucleus speckle. It is found in the cytoplasm. It carries out the reaction ATP + H2O = ADP + phosphate + H(+). Its function is as follows. Involved in nuclear export of spliced and unspliced mRNA. Component of the TREX complex which is thought to couple mRNA transcription, processing and nuclear export, and specifically associates with spliced mRNA and not with unspliced pre-mRNA. The TREX complex is recruited to spliced mRNAs by a transcription-independent mechanism, binds to mRNA upstream of the exon-junction complex (EJC) and is recruited in a splicing- and cap-dependent manner to a region near the 5' end of the mRNA where it functions in mRNA export to the cytoplasm via the TAP/NXF1 pathway. The THOC1-THOC2-THOC3 core complex alone is sufficient to promote ATPase activity of DDX39B; in the complex THOC2 is the only component that directly interacts with DDX39B. Associates with SARNP/CIP29, which facilitates RNA binding of DDX39B and likely plays a role in mRNA export. May undergo several rounds of ATP hydrolysis during assembly of TREX to drive subsequent loading of components such as ALYREF/THOC4 and CHTOP onto mRNA. Also associates with pre-mRNA independent of ALYREF/THOC4. Involved in the nuclear export of intronless mRNA; the ATP-bound form is proposed to recruit export adapter ALYREF/THOC4 to intronless mRNA; its ATPase activity is cooperatively stimulated by RNA and ALYREF/THOC4 and ATP hydrolysis is thought to trigger the dissociation from RNA to allow the association of ALYREF/THOC4 and the NXF1-NXT1 heterodimer. Involved in transcription elongation and genome stability. In terms of biological role, splice factor that is required for the first ATP-dependent step in spliceosome assembly and for the interaction of U2 snRNP with the branchpoint. Has both RNA-stimulated ATP binding/hydrolysis activity and ATP-dependent RNA unwinding activity. Even with the stimulation of RNA, the ATPase activity is weak. Can only hydrolyze ATP but not other NTPs. The RNA stimulation of ATPase activity does not have a strong preference for the sequence and length of the RNA. However, ssRNA stimulates the ATPase activity much more strongly than dsRNA. Can unwind 5' or 3' overhangs or blunt end RNA duplexes in vitro. The ATPase and helicase activities are not influenced by U2AF2; the effect of ALYREF/THOC4 is reported conflictingly. This Bos taurus (Bovine) protein is Spliceosome RNA helicase DDX39B (DDX39B).